The primary structure comprises 485 residues: Chromosomal replication initiator protein DnaA (485 aa).

The interval 1-74 is domain I, interacts with DnaA modulators; the sequence is MEKSKNIWSL…ILTNNGYDNV (74 aa). Residues 74-140 are domain II; the sequence is VTIVFTNQSP…EEEPKNFKNP (67 aa). Positions 141 to 357 are domain III, AAA+ region; it reads FLKKRYTFEN…AAVTKLKAYI (217 aa). 4 residues coordinate ATP: G185, G187, K188, and T189. Residues 358-485 form a domain IV, binds dsDNA region; that stretch reads DLDNIEIDID…TELMNKIKKN (128 aa).

It belongs to the DnaA family. Oligomerizes as a right-handed, spiral filament on DNA at oriC.

It is found in the cytoplasm. Functionally, plays an essential role in the initiation and regulation of chromosomal replication. ATP-DnaA binds to the origin of replication (oriC) to initiate formation of the DNA replication initiation complex once per cell cycle. Binds the DnaA box (a 9 base pair repeat at the origin) and separates the double-stranded (ds)DNA. Forms a right-handed helical filament on oriC DNA; dsDNA binds to the exterior of the filament while single-stranded (ss)DNA is stabiized in the filament's interior. The ATP-DnaA-oriC complex binds and stabilizes one strand of the AT-rich DNA unwinding element (DUE), permitting loading of DNA polymerase. After initiation quickly degrades to an ADP-DnaA complex that is not apt for DNA replication. Binds acidic phospholipids. The polypeptide is Chromosomal replication initiator protein DnaA (Borreliella afzelii (strain PKo) (Borrelia afzelii)).